Consider the following 310-residue polypeptide: Homoserine kinase (310 aa).

91–101 serves as a coordination point for ATP; it reads PIGSGLGSSAC.

The protein belongs to the GHMP kinase family. Homoserine kinase subfamily.

Its subcellular location is the cytoplasm. The enzyme catalyses L-homoserine + ATP = O-phospho-L-homoserine + ADP + H(+). It functions in the pathway amino-acid biosynthesis; L-threonine biosynthesis; L-threonine from L-aspartate: step 4/5. Its function is as follows. Catalyzes the ATP-dependent phosphorylation of L-homoserine to L-homoserine phosphate. The protein is Homoserine kinase of Escherichia coli O81 (strain ED1a).